Here is a 185-residue protein sequence, read N- to C-terminus: Ribosome-recycling factor (185 aa).

The interval N136–E159 is disordered.

This sequence belongs to the RRF family.

The protein localises to the cytoplasm. Responsible for the release of ribosomes from messenger RNA at the termination of protein biosynthesis. May increase the efficiency of translation by recycling ribosomes from one round of translation to another. The polypeptide is Ribosome-recycling factor (Pelotomaculum thermopropionicum (strain DSM 13744 / JCM 10971 / SI)).